A 238-amino-acid chain; its full sequence is Ribosomal RNA small subunit methyltransferase I (238 aa).

It belongs to the methyltransferase superfamily. RsmI family.

The protein resides in the cytoplasm. The enzyme catalyses cytidine(1402) in 16S rRNA + S-adenosyl-L-methionine = 2'-O-methylcytidine(1402) in 16S rRNA + S-adenosyl-L-homocysteine + H(+). Catalyzes the 2'-O-methylation of the ribose of cytidine 1402 (C1402) in 16S rRNA. This is Ribosomal RNA small subunit methyltransferase I from Mesomycoplasma conjunctivae (strain ATCC 25834 / NCTC 10147 / HRC/581) (Mycoplasma conjunctivae).